A 433-amino-acid chain; its full sequence is Arabinooligosaccharide-binding protein (433 aa).

The N-terminal stretch at 1 to 21 (MKKMTVCFLVLMMLLTLVIAG) is a signal peptide. Cys22 is lipidated: N-palmitoyl cysteine. Cys22 carries the S-diacylglycerol cysteine lipid modification.

This sequence belongs to the bacterial solute-binding protein 1 family. In terms of assembly, the complex is composed of two ATP-binding proteins (MsmX), two transmembrane proteins (AraP and AraQ) and a solute-binding protein (AraN).

The protein resides in the cell membrane. Its function is as follows. Part of the ABC transporter complex AraNPQ involved in the uptake of arabinooligosaccharides. Transports alpha-1,5-arabinooligosaccharides, at least up to four L-arabinosyl units. AraN captures the substrate and delivers it to the two transmembrane components. The chain is Arabinooligosaccharide-binding protein from Bacillus subtilis (strain 168).